Here is a 204-residue protein sequence, read N- to C-terminus: Pro-hevein (204 aa).

The N-terminal stretch at 1–17 (MNIFIVVLLCLTGVAIA) is a signal peptide. A Chitin-binding type-1 domain is found at 18–60 (EQCGRQAGGKLCPNNLCCSQWGWCGSTDEYCSPDHNCQSNCKD). 4 cysteine pairs are disulfide-bonded: C20/C35, C29/C41, C34/C48, and C54/C58. A propeptide spanning residues 61-66 (SGEGVG) is cleaved from the precursor. Residues 68 to 189 (GSASNVLATY…VNYQFVDCGD (122 aa)) enclose the Barwin domain. 3 disulfide bridges follow: C96–C128, C117–C151, and C131–C187.

Post-translationally, proteolytically processed to yield the two chains of the mature protein. As to expression, laticifer.

Functionally, N-acetyl-D-glucosamine / N-acetyl-D-neuraminic acid binding lectin. Can inhibit fungal growth. The chain is Pro-hevein (HEV1) from Hevea brasiliensis (Para rubber tree).